Here is a 745-residue protein sequence, read N- to C-terminus: MTIPNSIPITPELVASHGLKPEEYDRILQLIGREPTFTELGIFSAMWNEHCSYKSSKRWLRTLPTTGARVIQGPGENAGVVDIDDGDCVVFKMESHNHPSYIEPYQGAATGVGGILRDVFTMGARPIAAMNALRFGAPDHPKTRHLVSGVVAGVGGYGNAFGVPTVGGEVEFDERYNGNILVNAFAAGLAKSDAIFLSEAKGVGLPVVYLGAKTGRDGVGGATMASAEFDESIEEKRPTVQVGDPFTEKCLLEACLELMKTGAVIAIQDMGAAGLTCSAVEMGAKGDLGIELDLDTVPVREENMTAYEMMLSESQERMLMVLEPSKEEVAKAIFVKWGLDFAIVGKTTDDLRFRILHQGEEVANLPIKDLGDQAPEYDRPWRESDKRGPLPANLVDEPADYRAAILSLVGSANQSSRRWVYEQYDTLIQGNSLQLPGGDAGVVRVENHPTKALAFSSDVTPRYVEADPFEGGKQAVAECWRNITATGAEPLAATDNLNFGNPEKPEIMGQLVEAIKGIGEACRALDFPIVSGNVSLYNETNGVAILPTPTIAGVGLLPDWSRMAKIGGAQDGDHVLLIGTDGTHLGSSIYLRDLLGRTDGPAPEVDLHAERRNGDFIRSAIRNGQVTACHDISSGGLGIALAEMAMASAKGLTIDLSESRGPAHALLFGEDQARYVVTVPADLANFICANAEGAGVPFRRLGKVGGDALVIDGVCTIAVEELRNTHESWFPNFMDGKAETLAAAQ.

H50 is an active-site residue. ATP is bound by residues Y53 and K92. E94 contacts Mg(2+). Substrate contacts are provided by residues 95–98 and R117; that span reads SHNH. The active-site Proton acceptor is H96. Residue D118 coordinates Mg(2+). Q241 serves as a coordination point for substrate. Residue D269 participates in Mg(2+) binding. 313–315 contacts substrate; that stretch reads ESQ. 2 residues coordinate ATP: D495 and G532. N533 is a Mg(2+) binding site. Residue S535 participates in substrate binding.

Belongs to the FGAMS family. As to quaternary structure, monomer. Part of the FGAM synthase complex composed of 1 PurL, 1 PurQ and 2 PurS subunits.

The protein localises to the cytoplasm. It catalyses the reaction N(2)-formyl-N(1)-(5-phospho-beta-D-ribosyl)glycinamide + L-glutamine + ATP + H2O = 2-formamido-N(1)-(5-O-phospho-beta-D-ribosyl)acetamidine + L-glutamate + ADP + phosphate + H(+). It functions in the pathway purine metabolism; IMP biosynthesis via de novo pathway; 5-amino-1-(5-phospho-D-ribosyl)imidazole from N(2)-formyl-N(1)-(5-phospho-D-ribosyl)glycinamide: step 1/2. Part of the phosphoribosylformylglycinamidine synthase complex involved in the purines biosynthetic pathway. Catalyzes the ATP-dependent conversion of formylglycinamide ribonucleotide (FGAR) and glutamine to yield formylglycinamidine ribonucleotide (FGAM) and glutamate. The FGAM synthase complex is composed of three subunits. PurQ produces an ammonia molecule by converting glutamine to glutamate. PurL transfers the ammonia molecule to FGAR to form FGAM in an ATP-dependent manner. PurS interacts with PurQ and PurL and is thought to assist in the transfer of the ammonia molecule from PurQ to PurL. The chain is Phosphoribosylformylglycinamidine synthase subunit PurL from Allorhizobium ampelinum (strain ATCC BAA-846 / DSM 112012 / S4) (Agrobacterium vitis (strain S4)).